The following is a 346-amino-acid chain: Tetraacyldisaccharide 4'-kinase (346 aa).

54–61 (TVGGAGKT) is a binding site for ATP.

Belongs to the LpxK family.

It catalyses the reaction a lipid A disaccharide + ATP = a lipid IVA + ADP + H(+). The protein operates within glycolipid biosynthesis; lipid IV(A) biosynthesis; lipid IV(A) from (3R)-3-hydroxytetradecanoyl-[acyl-carrier-protein] and UDP-N-acetyl-alpha-D-glucosamine: step 6/6. Transfers the gamma-phosphate of ATP to the 4'-position of a tetraacyldisaccharide 1-phosphate intermediate (termed DS-1-P) to form tetraacyldisaccharide 1,4'-bis-phosphate (lipid IVA). The chain is Tetraacyldisaccharide 4'-kinase from Sinorhizobium medicae (strain WSM419) (Ensifer medicae).